The chain runs to 595 residues: Estrogen receptor (595 aa).

Residues methionine 1–tyrosine 184 form a modulating(transactivation AF-1); mediates interaction with MACROD1 region. O-linked (GlcNAc) serine glycosylation occurs at serine 10. The tract at residues leucine 35–serine 47 is required for interaction with NCOA1. The interaction with DDX5; self-association stretch occupies residues leucine 35–methionine 174. Phosphoserine; by CDK2 is present on residues serine 103 and serine 105. Serine 118 carries the post-translational modification Phosphoserine. Positions aspartate 143–methionine 174 are disordered. Positions serine 154 to leucine 165 are enriched in basic and acidic residues. Residue serine 167 is modified to Phosphoserine; by CK2. 2 consecutive NR C4-type zinc fingers follow at residues cysteine 185–cysteine 205 and cysteine 221–cysteine 245. The nuclear receptor DNA-binding region spans cysteine 185–methionine 250. A mediates interaction with DNTTIP2 region spans residues cysteine 185–leucine 310. Positions methionine 251–leucine 310 are hinge. The residue at position 260 (arginine 260) is an Asymmetric dimethylarginine; by PRMT1. The span at arginine 260–arginine 269 shows a compositional bias: basic residues. The disordered stretch occupies residues arginine 260–aspartate 285. An interaction with AKAP13 region spans residues glycine 262–isoleucine 595. The self-association stretch occupies residues methionine 264–isoleucine 595. The region spanning threonine 311 to histidine 547 is the NR LBD domain. Residues threonine 311–isoleucine 595 form a transactivation AF-2 region. Glutamate 353 and arginine 394 together coordinate 17beta-estradiol. Cysteine 447 carries S-palmitoyl cysteine lipidation. Histidine 524 contacts 17beta-estradiol. Phosphotyrosine; by Tyr-kinases is present on tyrosine 537. The tract at residues serine 554–serine 578 is disordered. A compositionally biased stretch (low complexity) spans serine 564–serine 578. An O-linked (GlcNAc) threonine glycan is attached at threonine 571.

The protein belongs to the nuclear hormone receptor family. NR3 subfamily. In terms of assembly, binds DNA as a homodimer. Can form a heterodimer with ESR2. Interacts with coactivator NCOA5. Interacts with PELP1, the interaction is enhanced by 17-beta-estradiol; the interaction increases ESR1 transcriptional activity. Interacts with NCOA7; the interaction is ligand-inducible. Interacts with AKAP13, CUEDC2, HEXIM1, KDM5A, MAP1S, SMARD1, and UBE1C. Interacts with MUC1; the interaction is stimulated by 7 beta-estradiol (E2) and enhances ESR1-mediated transcription. Interacts with DNTTIP2, and UIMC1. Interacts with KMT2D/MLL2. Interacts with ATAD2; the interaction is enhanced by estradiol. Interacts with KIF18A and LDB1. Interacts with RLIM (via its C-terminus). Interacts with MACROD1. Interacts with SH2D4A and PLCG. Interacts with SH2D4A; the interaction blocks binding to PLCG and inhibits estrogen-induced cell proliferation. Interacts with DYNLL1. Interacts with CCDC62; the interaction requires estradiol and appears to enhance the transcription of target genes. Interacts with NR2C1; the interaction prevents homodimerization of ESR1 and suppresses its transcriptional activity and cell growth. Interacts with DNAAF4. Interacts with PRMT2. Interacts with RBFOX2. Interacts with EP300; the interaction is estrogen-dependent and enhanced by CITED1. Interacts with CITED1; the interaction is estrogen-dependent. Interacts with FAM120B, FOXL2, PHB2 and SLC30A9. Interacts with coactivators NCOA3 and NCOA6. Interacts with STK3/MST2 only in the presence of SAV1 and vice-versa. Binds to CSNK1D. Interacts with NCOA2; NCOA2 can interact with ESR1 AF-1 and AF-2 domains simultaneously and mediate their transcriptional synergy. Interacts with DDX5. Interacts with NCOA1; the interaction seems to require a self-association of N-terminal and C-terminal regions. Interacts with ZNF366, DDX17, NFKB1, RELA, SP1 and SP3. Interacts with NRIP1. Interacts with GPER1; the interaction occurs in an estrogen-dependent manner. Interacts with CLOCK and the interaction is stimulated by estrogen. Interacts with TRIP4 (ufmylated); estrogen dependent. Interacts with LMTK3; the interaction phosphorylates ESR1 (in vitro) and protects it against proteasomal degradation. Interacts with CCAR2 (via N-terminus) in a ligand-independent manner. Interacts with ZFHX3. Interacts with SFR1 in a ligand-dependent and -independent manner. Interacts with DCAF13, LATS1 and DCAF1; regulates ESR1 ubiquitination and ubiquitin-mediated proteasomal degradation. Interacts (via DNA-binding domain) with POU4F2 (C-terminus); this interaction increases the estrogen receptor ESR1 transcriptional activity in a DNA- and ligand 17-beta-estradiol-independent manner. Interacts with ESRRB isoform 1. Interacts with UBE3A and WBP2. Interacts with GTF2B. Interacts with RBM39. In the absence of hormonal ligand, interacts with TACC1. Interacts with PI3KR1 or PI3KR2 and PTK2/FAK1. Interacts with SRC. Interacts with BAG1; the interaction is promoted in the absence of estradiol (17-beta-estradiol/E2). Interacts with and ubiquitinated by STUB1; the interaction is promoted in the absence of estradiol (17-beta-estradiol/E2). Interacts with NEDD8. Post-translationally, ubiquitinated; regulated by LATS1 via DCAF1 it leads to ESR1 proteasomal degradation. Deubiquitinated by OTUB1. Ubiquitinated by STUB1/CHIP; in the CA1 hippocampal region following loss of endogenous circulating estradiol (17-beta-estradiol/E2). Ubiquitinated by UBR5, leading to its degradation: UBR5 specifically recognizes and binds ligand-bound ESR1 when it is not associated with coactivators (NCOAs). In presence of NCOAs, the UBR5-degron is not accessible, preventing its ubiquitination and degradation. Phosphorylated by cyclin A/CDK2 and CK1. Phosphorylation probably enhances transcriptional activity. Dephosphorylation at Ser-118 by PPP5C inhibits its transactivation activity. Phosphorylated by LMTK3 (in vitro). In terms of processing, palmitoylated at Cys-447 by ZDHHC7 and ZDHHC21. Palmitoylation is required for plasma membrane targeting and for rapid intracellular signaling via ERK and AKT kinases and cAMP generation, but not for signaling mediated by the nuclear hormone receptor. Post-translationally, dimethylated by PRMT1 at Arg-260. The methylation may favor cytoplasmic localization. Demethylated by JMJD6 at Arg-260.

The protein localises to the nucleus. It is found in the cytoplasm. The protein resides in the golgi apparatus. It localises to the cell membrane. Nuclear hormone receptor. The steroid hormones and their receptors are involved in the regulation of eukaryotic gene expression and affect cellular proliferation and differentiation in target tissues. Ligand-dependent nuclear transactivation involves either direct homodimer binding to a palindromic estrogen response element (ERE) sequence or association with other DNA-binding transcription factors, such as AP-1/c-Jun, c-Fos, ATF-2, Sp1 and Sp3, to mediate ERE-independent signaling. Ligand binding induces a conformational change allowing subsequent or combinatorial association with multiprotein coactivator complexes through LXXLL motifs of their respective components. Mutual transrepression occurs between the estrogen receptor (ER) and NF-kappa-B in a cell-type specific manner. Decreases NF-kappa-B DNA-binding activity and inhibits NF-kappa-B-mediated transcription from the IL6 promoter and displace RELA/p65 and associated coregulators from the promoter. Recruited to the NF-kappa-B response element of the CCL2 and IL8 promoters and can displace CREBBP. Present with NF-kappa-B components RELA/p65 and NFKB1/p50 on ERE sequences. Can also act synergistically with NF-kappa-B to activate transcription involving respective recruitment adjacent response elements; the function involves CREBBP. Can activate the transcriptional activity of TFF1. Also mediates membrane-initiated estrogen signaling involving various kinase cascades. Essential for MTA1-mediated transcriptional regulation of BRCA1 and BCAS3. Maintains neuronal survival in response to ischemic reperfusion injury when in the presence of circulating estradiol (17-beta-estradiol/E2). This is Estrogen receptor (ESR1) from Mesocricetus auratus (Golden hamster).